Reading from the N-terminus, the 130-residue chain is MKYTNIVIGIIIKKNKIYITKARKKKYVLDLWEFPGGKVKENENLTYSLKRELSEEVGLKILRFRFFRCIKYFYKKIKLYFFLITRWKGRIYSKEGYLYKWIFLDDLKYFNFPSPNSHIIHDLQKMIFFK.

The Nudix hydrolase domain occupies 1 to 128; that stretch reads MKYTNIVIGI…IIHDLQKMIF (128 aa). Glycine 36 and glutamate 56 together coordinate Mg(2+). A Nudix box motif is present at residues 37–58; it reads GKVKENENLTYSLKRELSEEVG.

It belongs to the Nudix hydrolase family. Mg(2+) serves as cofactor.

It carries out the reaction 8-oxo-dGTP + H2O = 8-oxo-dGMP + diphosphate + H(+). The catalysed reaction is 8-oxo-GTP + H2O = 8-oxo-GMP + diphosphate + H(+). Functionally, specifically hydrolyzes both 8-oxo-deoxyguanosine triphosphate (8-oxo-dGTP) and 8-oxo-guanosine triphosphate (8-oxo-GTP) to the related monophosphates, thereby cleaning up the nucleotide pools and preventing misincorporation of 8-oxoGua into DNA and RNA. It prevents replicational errors by removing an oxidatively damaged form of guanine (8-oxo-dGTP) from DNA and the nucleotide pool. 8-oxo-dGTP can be inserted opposite dA and dC residues of template DNA with almost equal efficiency thus leading to A.T to G.C transversions. This is 8-oxo-dGTP diphosphatase (mutT) from Buchnera aphidicola subsp. Schizaphis graminum (strain Sg).